Here is a 291-residue protein sequence, read N- to C-terminus: 33 kDa chaperonin (291 aa).

Intrachain disulfides connect cysteine 235–cysteine 237 and cysteine 268–cysteine 271.

The protein belongs to the HSP33 family. In terms of processing, under oxidizing conditions two disulfide bonds are formed involving the reactive cysteines. Under reducing conditions zinc is bound to the reactive cysteines and the protein is inactive.

The protein localises to the cytoplasm. Its function is as follows. Redox regulated molecular chaperone. Protects both thermally unfolding and oxidatively damaged proteins from irreversible aggregation. Plays an important role in the bacterial defense system toward oxidative stress. The sequence is that of 33 kDa chaperonin from Bacillus subtilis (strain 168).